Here is a 338-residue protein sequence, read N- to C-terminus: Tagatose 1,6-diphosphate aldolase (338 aa).

It belongs to the aldolase LacD family.

It catalyses the reaction D-tagatofuranose 1,6-bisphosphate = D-glyceraldehyde 3-phosphate + dihydroxyacetone phosphate. It participates in carbohydrate metabolism; D-tagatose 6-phosphate degradation; D-glyceraldehyde 3-phosphate and glycerone phosphate from D-tagatose 6-phosphate: step 2/2. The sequence is that of Tagatose 1,6-diphosphate aldolase from Listeria innocua serovar 6a (strain ATCC BAA-680 / CLIP 11262).